The sequence spans 101 residues: Small ribosomal subunit protein bS18c (101 aa).

The protein belongs to the bacterial ribosomal protein bS18 family. In terms of assembly, part of the 30S ribosomal subunit.

It is found in the plastid. The protein localises to the chloroplast. The protein is Small ribosomal subunit protein bS18c of Coffea arabica (Arabian coffee).